Reading from the N-terminus, the 193-residue chain is Ribonuclease HII (193 aa).

The region spanning 15–193 (CIVAGIDEAG…PYHRRSFRCC (179 aa)) is the RNase H type-2 domain. The a divalent metal cation site is built by D21, E22, and D112.

Belongs to the RNase HII family. The cofactor is Mn(2+). Mg(2+) serves as cofactor.

The protein resides in the cytoplasm. It catalyses the reaction Endonucleolytic cleavage to 5'-phosphomonoester.. In terms of biological role, endonuclease that specifically degrades the RNA of RNA-DNA hybrids. The protein is Ribonuclease HII of Rickettsia rickettsii (strain Iowa).